The sequence spans 475 residues: MLNGQKEYRVEKDFLGEKQIEADVYYGIQTLRASENFPITGYKIHEEMINALAIVKKAAALANMDVKRLYEGIGQAIVQAADEILEGKWHDQFIVDPIQGGAGTSMNMNANEVIGNRALEIMGHKKGDYIHLSPNTHVNMSQSTNDVFPTAIHISTLKLLEKLLKTMEDMHSVFKQKAQEFDSVIKMGRTHLQDAVPIRLGQEFEAYSRVLERDIKRIKQSRQHLYEVNMGATAVGTGLNADPEYIKQVVKHLADISGLPLVGADHLVDATQNTDAYTEVSASLKVCMMNMSKIANDLRLMASGPRAGLAEISLPARQPGSSIMPGKVNPVMAELINQIAFQVIGNDNTICLASEAGQLELNVMEPVLVFNLLQSISIMNNGFRSFTDNCLKGIEANEKRMKQYVEKSAGVITAVNPHLGYEAAARIAREAIMTGQSVRDLCLQHDVLTEEELDIILNPYEMTKPGIAGKELLEK.

Residues Thr104, Ser143, Thr144, Asn145, Thr190, and His191 each coordinate L-aspartate. The SS loop stretch occupies residues 320 to 329 (GSSIMPGKVN). The active-site Proton acceptor is the Ser321. L-aspartate contacts are provided by Ser322 and Lys327.

Belongs to the class-II fumarase/aspartase family. Aspartase subfamily. In terms of assembly, homotetramer.

It carries out the reaction L-aspartate = fumarate + NH4(+). Its function is as follows. Catalyzes the reversible conversion of L-aspartate to fumarate and ammonia. The chain is Aspartate ammonia-lyase from Bacillus subtilis (strain 168).